The following is a 299-amino-acid chain: Putative zinc-binding protein ORF12 (299 aa).

The sequence is that of Putative zinc-binding protein ORF12 (ORF12) from Ictaluridae (bullhead catfishes).